The chain runs to 499 residues: MVRIQELTAALSLASVVQASWIQKRNSINACLAAADVEFHEEDSEGWDMDGTAFNLRVDYDPAAIAIPRSTEDIAAAVQCGLDAGVQISAKGGGHSYGSYGFGGEDGHLMLELDRMYRVSVDDNNVATIQGGARLGYTALELLDQGNRALSHGTCPAVGVGGHVLGGGYGFATHTHGLTLDWLIGATVVLADASIVHVSETENADLFWALRGGGGGFAIVSEFEFNTFEAPEIITTYQVTTTWNRKQHVAGLKALQDWAQNTMPRELSMRLEINANALNWEGNFFGNAKDLKKILQPIMKKAGGKSTISKLVETDWYGQINTYLYGADLNITYNYDVHEYFYANSLTAPRLSDEAIQAFVDYKFDNSSVRPGRGWWIQWDFHGGKNSALAAVSNDETAYAHRDQLWLWQFYDSIYDYENNTSPYPESGFEFMQGFVATIEDTLPEDRKGKYFNYADTTLTKEEAQKLYWRGNLEKLQAIKAKYDPEDVFGNVVSVEPIA.

Positions 1–25 (MVRIQELTAALSLASVVQASWIQKR) are cleaved as a signal peptide. A disulfide bond links Cys-31 and Cys-80. The region spanning 58–230 (VDYDPAAIAI…SEFEFNTFEA (173 aa)) is the FAD-binding PCMH-type domain. The segment at residues 95-155 (HSYGSYGFGG…GNRALSHGTC (61 aa)) is a cross-link (6-(S-cysteinyl)-8alpha-(pros-histidyl)-FAD (His-Cys)). Substrate is bound by residues Tyr-97, Thr-154, and Arg-270. 2 N-linked (GlcNAc...) asparagine glycosylation sites follow: Asn-330 and Asn-366. 2 residues coordinate substrate: Gln-378 and Gln-409. Residue Asn-419 is glycosylated (N-linked (GlcNAc...) asparagine). Substrate is bound at residue Tyr-454. Tyr-454 serves as the catalytic Proton acceptor.

It belongs to the oxygen-dependent FAD-linked oxidoreductase family. The cofactor is FAD. The FAD cofactor is bound via a bicovalent 6-S-cysteinyl, 8alpha-N1-histidyl FAD linkage.

The protein resides in the secreted. The enzyme catalyses beta-lactose + O2 = lactobiono-1,5-lactone + H2O2. It catalyses the reaction D-cellobiose + O2 = D-cellobiono-1,5-lactone + H2O2. It carries out the reaction D-cellotriose + O2 = D-cellotriono-1,5-lactone + H2O2. The catalysed reaction is D-cellotetraose + O2 = D-cellotetraono-1,5-lactone + H2O2. The enzyme catalyses D-cellopentaose + O2 = D-cellopentaono-1,5-lactone + H2O2. It catalyses the reaction D-cellohexaose + O2 = D-cellohexaono-1,5-lactone + H2O2. Its function is as follows. Catalyzes the selective oxidation of C1 hydroxyl moieties on mono- and disaccharides with concomitant reduction of molecular oxygen to hydrogen peroxide. This results in the formation of the corresponding lactones, which typically undergo spontaneous hydrolysis. Glucooligosaccharide oxidase is able to oxidize the monosaccharide D-glucose as well as the disaccharides maltose, cellobiose, and lactose. In addition, it shows high selectivity for cello- and maltooligosaccharides, indicating that glucooligosaccharide oxidase prefers oligosaccharides with a beta-D-glucosyl unit on the reducing end and additional sugar units linked by alpha- or beta-1,4 glucosidic bonds. This chain is Glucooligosaccharide oxidase (gluO), found in Sarocladium strictum (Black bundle disease fungus).